Consider the following 673-residue polypeptide: DNA ligase (673 aa).

NAD(+) contacts are provided by residues 35–39 (DADYD), 84–85 (SL), and Glu-115. Lys-117 acts as the N6-AMP-lysine intermediate in catalysis. Arg-138, Glu-180, Lys-296, and Lys-320 together coordinate NAD(+). Zn(2+) contacts are provided by Cys-415, Cys-418, Cys-433, and Cys-438. The BRCT domain maps to 595–673 (ERGTALAGQT…EDALKKLLGK (79 aa)).

It belongs to the NAD-dependent DNA ligase family. LigA subfamily. Requires Mg(2+) as cofactor. Mn(2+) serves as cofactor.

It catalyses the reaction NAD(+) + (deoxyribonucleotide)n-3'-hydroxyl + 5'-phospho-(deoxyribonucleotide)m = (deoxyribonucleotide)n+m + AMP + beta-nicotinamide D-nucleotide.. In terms of biological role, DNA ligase that catalyzes the formation of phosphodiester linkages between 5'-phosphoryl and 3'-hydroxyl groups in double-stranded DNA using NAD as a coenzyme and as the energy source for the reaction. It is essential for DNA replication and repair of damaged DNA. This Koribacter versatilis (strain Ellin345) protein is DNA ligase.